The primary structure comprises 166 residues: UPF0303 protein Avin_29320 (166 aa).

This sequence belongs to the UPF0303 family.

This chain is UPF0303 protein Avin_29320, found in Azotobacter vinelandii (strain DJ / ATCC BAA-1303).